The chain runs to 134 residues: Probable glycine cleavage system H protein (134 aa).

The region spanning 29–110 is the Lipoyl-binding domain; the sequence is TVLVGITDYA…PYGAWIAKIK (82 aa). N6-lipoyllysine is present on Lys70.

Belongs to the GcvH family. As to quaternary structure, the glycine cleavage system is composed of four proteins: P, T, L and H. The cofactor is (R)-lipoate.

Its function is as follows. The glycine cleavage system catalyzes the degradation of glycine. The H protein shuttles the methylamine group of glycine from the P protein to the T protein. The polypeptide is Probable glycine cleavage system H protein (Pyrococcus horikoshii (strain ATCC 700860 / DSM 12428 / JCM 9974 / NBRC 100139 / OT-3)).